We begin with the raw amino-acid sequence, 203 residues long: Ras-related protein Rab5A (203 aa).

Residue 18-26 (GDVGTGKSS) participates in GTP binding. The Effector region motif lies at 40-48 (QESTIGAAF). GTP contacts are provided by residues 66 to 70 (DTAGQ), 124 to 127 (NKAD), and 154 to 155 (SA). 2 S-geranylgeranyl cysteine lipidation sites follow: Cys201 and Cys202.

The protein belongs to the small GTPase superfamily. Rab family. In terms of assembly, interacts with VPS9A. Interacts with NSF and RBP-L. Highly expressed in roots. Expressed at low levels in shoots, flowers and grains.

It localises to the prevacuolar compartment membrane. The protein localises to the golgi apparatus membrane. It is found in the cell membrane. Its subcellular location is the protein storage vacuole membrane. Plays an important role in intracellular trafficking of seed storage proteins to the protein storage vacuoles (PSVs). Participates in the transport of the proglutelins from the Golgi apparatus to the PSVs in endosperm. Functions cooperatively with VPS9A to regulate post-Golgi dense vesicle-mediated transport of storage proteins to the type II protein bodies (PBII) protein storage vacuoles in developing endosperm. Involved in the maintenance of the general structural organization of the endomembrane system in developing endosperm. Binds GTP in vitro. Forms a quaternary complex with the two glutelin zipcode RNA-binding proteins RBP-L and RBP-P, and the membrane trafficking factor NSF. This quaternay complex carries glutelin mRNAs for active transport on endosomes to the cortical endoplasmic reticulum membrane, and enables endosome-mediated glutelin mRNA transport in endosperm cells. This is Ras-related protein Rab5A from Oryza sativa subsp. japonica (Rice).